The following is a 331-amino-acid chain: NADH-quinone oxidoreductase subunit H 2 (331 aa).

8 helical membrane-spanning segments follow: residues 6–26 (AGFLVLIAKLTIVLAVLLLVA), 79–99 (IFMLAPAVVAATALLVFAVIP), 120–140 (VGLLYFFALSSLGVYGVALGG), 155–175 (GAAQMISYELSLGLAIVPVVM), 193–213 (PFILTQPVAFAIFVISAMAEI), 242–262 (LFFLGEYVNMQVLGGLVAVLF), 271–291 (LPPVVWLFIKIVLVALIMIWV), and 310–330 (VLIPLALVNIMVTGAWVLWMG).

This sequence belongs to the complex I subunit 1 family. As to quaternary structure, NDH-1 is composed of 14 different subunits. Subunits NuoA, H, J, K, L, M, N constitute the membrane sector of the complex.

The protein resides in the cell inner membrane. It catalyses the reaction a quinone + NADH + 5 H(+)(in) = a quinol + NAD(+) + 4 H(+)(out). In terms of biological role, NDH-1 shuttles electrons from NADH, via FMN and iron-sulfur (Fe-S) centers, to quinones in the respiratory chain. The immediate electron acceptor for the enzyme in this species is believed to be ubiquinone. Couples the redox reaction to proton translocation (for every two electrons transferred, four hydrogen ions are translocated across the cytoplasmic membrane), and thus conserves the redox energy in a proton gradient. This subunit may bind ubiquinone. In Syntrophobacter fumaroxidans (strain DSM 10017 / MPOB), this protein is NADH-quinone oxidoreductase subunit H 2.